The primary structure comprises 219 residues: Proteasome subunit beta 2 (219 aa).

A propeptide spans 1-25 (removed in mature form; by autocatalysis); the sequence is MAEWIAGGLEGPAGRGLDERVVRSG. Thr26 acts as the Nucleophile in catalysis.

It belongs to the peptidase T1B family. As to quaternary structure, the 20S proteasome core is composed of 14 alpha and 14 beta subunits that assemble into four stacked heptameric rings, resulting in a barrel-shaped structure. The two inner rings, each composed of seven catalytic beta subunits, are sandwiched by two outer rings, each composed of seven alpha subunits. The catalytic chamber with the active sites is on the inside of the barrel. Has a gated structure, the ends of the cylinder being occluded by the N-termini of the alpha-subunits. Is capped at one or both ends by the proteasome regulatory ATPase, PAN.

It localises to the cytoplasm. The enzyme catalyses Cleavage of peptide bonds with very broad specificity.. The formation of the proteasomal ATPase PAN-20S proteasome complex, via the docking of the C-termini of PAN into the intersubunit pockets in the alpha-rings, triggers opening of the gate for substrate entry. Interconversion between the open-gate and close-gate conformations leads to a dynamic regulation of the 20S proteasome proteolysis activity. Component of the proteasome core, a large protease complex with broad specificity involved in protein degradation. The chain is Proteasome subunit beta 2 from Aeropyrum pernix (strain ATCC 700893 / DSM 11879 / JCM 9820 / NBRC 100138 / K1).